The following is a 234-amino-acid chain: Adenosine 5'-phosphosulfate reductase (234 aa).

The [4Fe-4S] cluster site is built by Cys-120, Cys-121, Cys-203, and Cys-206. Residue Cys-229 is the Nucleophile; cysteine thiosulfonate intermediate of the active site.

Belongs to the PAPS reductase family. CysH subfamily. Requires [4Fe-4S] cluster as cofactor.

Its subcellular location is the cytoplasm. The catalysed reaction is [thioredoxin]-disulfide + sulfite + AMP + 2 H(+) = adenosine 5'-phosphosulfate + [thioredoxin]-dithiol. Its pathway is sulfur metabolism; hydrogen sulfide biosynthesis; sulfite from sulfate. In terms of biological role, catalyzes the formation of sulfite from adenosine 5'-phosphosulfate (APS) using thioredoxin as an electron donor. In Bacillus cytotoxicus (strain DSM 22905 / CIP 110041 / 391-98 / NVH 391-98), this protein is Adenosine 5'-phosphosulfate reductase.